The chain runs to 220 residues: Deoxyribose-phosphate aldolase 2 (220 aa).

D89 functions as the Proton donor/acceptor in the catalytic mechanism. K151 serves as the catalytic Schiff-base intermediate with acetaldehyde. K180 serves as the catalytic Proton donor/acceptor.

It belongs to the DeoC/FbaB aldolase family. DeoC type 1 subfamily.

It is found in the cytoplasm. The catalysed reaction is 2-deoxy-D-ribose 5-phosphate = D-glyceraldehyde 3-phosphate + acetaldehyde. Its pathway is carbohydrate degradation; 2-deoxy-D-ribose 1-phosphate degradation; D-glyceraldehyde 3-phosphate and acetaldehyde from 2-deoxy-alpha-D-ribose 1-phosphate: step 2/2. Its function is as follows. Catalyzes a reversible aldol reaction between acetaldehyde and D-glyceraldehyde 3-phosphate to generate 2-deoxy-D-ribose 5-phosphate. This is Deoxyribose-phosphate aldolase 2 from Staphylococcus aureus (strain MRSA252).